Here is a 343-residue protein sequence, read N- to C-terminus: Heat-inducible transcription repressor HrcA (343 aa).

Belongs to the HrcA family.

Negative regulator of class I heat shock genes (grpE-dnaK-dnaJ and groELS operons). Prevents heat-shock induction of these operons. In Mycolicibacterium vanbaalenii (strain DSM 7251 / JCM 13017 / BCRC 16820 / KCTC 9966 / NRRL B-24157 / PYR-1) (Mycobacterium vanbaalenii), this protein is Heat-inducible transcription repressor HrcA.